A 207-amino-acid chain; its full sequence is ATP synthase subunit b (207 aa).

Positions 1–27 are cleaved as a signal peptide; sequence MKLRATFVFKTTLVALSFALFALFLVS. Cys-28 is lipidated: N-palmitoyl cysteine. Residue Cys-28 is the site of S-diacylglycerol cysteine attachment. A helical membrane pass occupies residues 49–69; sequence WVFLAHLLAFVILLFLLLFLF.

This sequence belongs to the ATPase B chain family. As to quaternary structure, F-type ATPases have 2 components, F(1) - the catalytic core - and F(0) - the membrane proton channel. F(1) has five subunits: alpha(3), beta(3), gamma(1), delta(1), epsilon(1). F(0) has three main subunits: a(1), b(2) and c(10-14). The alpha and beta chains form an alternating ring which encloses part of the gamma chain. F(1) is attached to F(0) by a central stalk formed by the gamma and epsilon chains, while a peripheral stalk is formed by the delta and b chains.

It is found in the cell membrane. Its function is as follows. F(1)F(0) ATP synthase produces ATP from ADP in the presence of a proton or sodium gradient. F-type ATPases consist of two structural domains, F(1) containing the extramembraneous catalytic core and F(0) containing the membrane proton channel, linked together by a central stalk and a peripheral stalk. During catalysis, ATP synthesis in the catalytic domain of F(1) is coupled via a rotary mechanism of the central stalk subunits to proton translocation. Component of the F(0) channel, it forms part of the peripheral stalk, linking F(1) to F(0). The chain is ATP synthase subunit b from Mycoplasma pneumoniae (strain ATCC 29342 / M129 / Subtype 1) (Mycoplasmoides pneumoniae).